We begin with the raw amino-acid sequence, 124 residues long: Putative transmembrane protein FLJ36131 (124 aa).

Residues 1–2 (MY) lie on the Cytoplasmic side of the membrane. The chain crosses the membrane as a helical span at residues 3 to 23 (VSISFLLGLSHLVLCCLLTFI). Topologically, residues 24 to 124 (VNFYLPPESI…LLTTTSYSVS (101 aa)) are extracellular. Asn41 is a glycosylation site (N-linked (GlcNAc...) asparagine).

The protein localises to the membrane. This Homo sapiens (Human) protein is Putative transmembrane protein FLJ36131.